The primary structure comprises 296 residues: Gamma-D-glutamyl-L-lysine dipeptidyl-peptidase (296 aa).

Substrate is bound by residues Y90, D199 to S201, and D218 to A219. The region spanning K170–S295 is the NlpC/P60 domain. Catalysis depends on C200, which acts as the Nucleophile. The active-site Proton acceptor is the H253. H265 is a catalytic residue.

It belongs to the peptidase C40 family.

The enzyme catalyses The enzyme releases L-Ala-gamma-D-Glu dipeptides from cell wall peptides via cleavage of an L-Ala-gamma-D-Glu-|-L-Lys bond.. It functions in the pathway cell wall degradation; peptidoglycan degradation. Functionally, specifically hydrolyzes gamma-D-glutamyl-L-lysine bonds in murein peptides, releasing L-Ala-D-Glu. This chain is Gamma-D-glutamyl-L-lysine dipeptidyl-peptidase (ykfC), found in Bacillus subtilis (strain 168).